We begin with the raw amino-acid sequence, 246 residues long: MGKRILVQRRGRGGSQFRSPSWKRDGPVRYLPLEATSGRGYVVELLHEPGLNAPVARIVTESGAEFFNYAAEGLYVGQVIEMGSGATPKAGNIMILGEIPEGTMIFNVEKRAGDGGKYARSSGTYAVVVGQKPEENKTIIRLPSGRVIEVDARGRATVGIVAGGGRIEKPFLKAGKKYHRARAKAWKYPTVRGKAMSPYAHPHGGGSHQKGGTPVPKTAPPGQKVGFIGSRCTGRGCVRARAQQKQ.

The segment at 196 to 226 (MSPYAHPHGGGSHQKGGTPVPKTAPPGQKVG) is disordered.

It belongs to the universal ribosomal protein uL2 family. Part of the 50S ribosomal subunit. Forms a bridge to the 30S subunit in the 70S ribosome.

One of the primary rRNA binding proteins. Required for association of the 30S and 50S subunits to form the 70S ribosome, for tRNA binding and peptide bond formation. It has been suggested to have peptidyltransferase activity; this is somewhat controversial. Makes several contacts with the 16S rRNA in the 70S ribosome. In Pyrobaculum arsenaticum (strain DSM 13514 / JCM 11321 / PZ6), this protein is Large ribosomal subunit protein uL2.